The sequence spans 300 residues: Iron-dependent extradiol dioxygenase (300 aa).

2 consecutive VOC domains span residues 5–120 (SLAY…AFHG) and 142–270 (GLGH…FGCE). Position 145 (His-145) interacts with Fe cation. Substrate-binding residues include His-200, His-215, Asp-250, and Tyr-256. His-215 is a Fe cation binding site. Glu-266 is a Fe cation binding site.

This sequence belongs to the extradiol ring-cleavage dioxygenase family. Homodimer. The cofactor is Fe(2+).

The catalysed reaction is 3,4-dihydroxy-9,10-secoandrosta-1,3,5(10)-triene-9,17-dione + O2 = (1E,2Z)-3-hydroxy-5,9,17-trioxo-4,5:9,10-disecoandrosta-1(10),2-dien-4-oate + H(+). It participates in steroid metabolism; cholesterol metabolism. In terms of biological role, catalyzes the meta-cleavage of 3,4-dihydroxy-9,10-seconandrost-1,3,5(10)-triene-9,17-dione (3,4-DHSA) to produce 4,5-9,10-diseco-3-hydroxy-5,9,17-trioxoandrosta-1(10),2-diene-4-oic acid (4,9-DSHA). Also involved in biphenyl and polychlorinated biphenyls (PCBs) degradation. This chain is Iron-dependent extradiol dioxygenase (hsaC), found in Rhodococcus jostii (strain RHA1).